Consider the following 908-residue polypeptide: DNA mismatch repair protein MutS (908 aa).

629–636 (GPNMAGKS) is a binding site for ATP. Positions 822–863 (ADEADGAPSEDPPSEDPPSGDGVRAKKGEADAVPDLEDSQAN) are disordered.

Belongs to the DNA mismatch repair MutS family.

Functionally, this protein is involved in the repair of mismatches in DNA. It is possible that it carries out the mismatch recognition step. This protein has a weak ATPase activity. The polypeptide is DNA mismatch repair protein MutS (Salinibacter ruber (strain DSM 13855 / M31)).